The following is a 246-amino-acid chain: tRNA (guanine-N(1)-)-methyltransferase (246 aa).

S-adenosyl-L-methionine contacts are provided by residues Gly-112 and 131–136 (IGDYVL).

It belongs to the RNA methyltransferase TrmD family. In terms of assembly, homodimer.

It localises to the cytoplasm. It catalyses the reaction guanosine(37) in tRNA + S-adenosyl-L-methionine = N(1)-methylguanosine(37) in tRNA + S-adenosyl-L-homocysteine + H(+). In terms of biological role, specifically methylates guanosine-37 in various tRNAs. This chain is tRNA (guanine-N(1)-)-methyltransferase, found in Fervidobacterium nodosum (strain ATCC 35602 / DSM 5306 / Rt17-B1).